The chain runs to 195 residues: MRKAEISRKTAETDISVTVDLDGTGRYDIRTGVGFFDHMMDQLARHALIDITLRCEGDLHIDDHHTVEDCGIALGQALTRALGDKRGIRRYGSFHLAMDDALVRAALDLSGRPFLVWNLPFPTEKIGSFDTELVREFFQALATHGGITLHVDLIHGVNSHHIAEAAFKAVARSLREAVEPDPRRADAIPSTKGML.

Belongs to the imidazoleglycerol-phosphate dehydratase family.

Its subcellular location is the cytoplasm. The catalysed reaction is D-erythro-1-(imidazol-4-yl)glycerol 3-phosphate = 3-(imidazol-4-yl)-2-oxopropyl phosphate + H2O. It participates in amino-acid biosynthesis; L-histidine biosynthesis; L-histidine from 5-phospho-alpha-D-ribose 1-diphosphate: step 6/9. In Cereibacter sphaeroides (strain ATCC 17023 / DSM 158 / JCM 6121 / CCUG 31486 / LMG 2827 / NBRC 12203 / NCIMB 8253 / ATH 2.4.1.) (Rhodobacter sphaeroides), this protein is Imidazoleglycerol-phosphate dehydratase.